The sequence spans 126 residues: MAANDATSSEEGQVFGCHKVEEWNEYFKKGVETKKLVVVDFTASWCGPCRFIAPILADIAKKMPHVIFLKVDVDELKTVSAEWSVEAMPTFVFIKDGKEVDRVVGAKKEELQQTIVKHAAPATVTA.

One can recognise a Thioredoxin domain in the interval 2-120 (AANDATSSEE…LQQTIVKHAA (119 aa)). Residues Cys46 and Cys49 each act as nucleophile in the active site. Cys46 and Cys49 form a disulfide bridge.

The protein belongs to the thioredoxin family. Plant H-type subfamily.

It is found in the cytoplasm. Participates in various redox reactions through the reversible oxidation of the active center dithiol to a disulfide. The H form is known to activate a number of cytosolic enzymes. This chain is Thioredoxin H-type 1, found in Nicotiana tabacum (Common tobacco).